Reading from the N-terminus, the 200-residue chain is Ras-related protein Rab5 (200 aa).

Residues 17–25 (GDMGAGKSS), 36–42 (LEFQEST), 65–69 (DTAGQ), 123–126 (NKAD), and 153–155 (SAK) contribute to the GTP site. Residues 39–47 (QESTIGAAF) carry the Effector region motif. 2 S-geranylgeranyl cysteine lipidation sites follow: cysteine 198 and cysteine 199.

This sequence belongs to the small GTPase superfamily. Rab family. Virtually not expressed in leaves, higher in stems and roots, and highest in flowers.

It localises to the cell membrane. Its function is as follows. Protein transport. Probably involved in vesicular traffic. This Nicotiana tabacum (Common tobacco) protein is Ras-related protein Rab5 (RAB5).